Consider the following 445-residue polypeptide: 6-phosphogluconate dehydrogenase, decarboxylating (445 aa).

Residues 1–4, 22–24, 63–65, and Asn91 contribute to the NADP(+) site; these read AVMG, NRS, and VKA. Substrate contacts are provided by residues Asn91 and 117-119; that span reads SGG. Lys172 (proton acceptor) is an active-site residue. 175 to 176 is a substrate binding site; it reads HN. Glu179 functions as the Proton donor in the catalytic mechanism. Substrate-binding residues include Tyr180, Lys249, Arg276, Arg434, and His440.

It belongs to the 6-phosphogluconate dehydrogenase family. Homodimer.

The enzyme catalyses 6-phospho-D-gluconate + NADP(+) = D-ribulose 5-phosphate + CO2 + NADPH. The protein operates within carbohydrate degradation; pentose phosphate pathway; D-ribulose 5-phosphate from D-glucose 6-phosphate (oxidative stage): step 3/3. Functionally, catalyzes the oxidative decarboxylation of 6-phosphogluconate to ribulose 5-phosphate and CO(2), with concomitant reduction of NADP to NADPH. The protein is 6-phosphogluconate dehydrogenase, decarboxylating (gnd) of Citrobacter freundii.